The primary structure comprises 156 residues: Ribosomal RNA large subunit methyltransferase H (156 aa).

Residues Leu73, Gly104, and 123 to 128 (LSPLTL) each bind S-adenosyl-L-methionine.

Belongs to the RNA methyltransferase RlmH family. Homodimer.

It is found in the cytoplasm. It carries out the reaction pseudouridine(1915) in 23S rRNA + S-adenosyl-L-methionine = N(3)-methylpseudouridine(1915) in 23S rRNA + S-adenosyl-L-homocysteine + H(+). In terms of biological role, specifically methylates the pseudouridine at position 1915 (m3Psi1915) in 23S rRNA. This is Ribosomal RNA large subunit methyltransferase H from Pectobacterium atrosepticum (strain SCRI 1043 / ATCC BAA-672) (Erwinia carotovora subsp. atroseptica).